The sequence spans 290 residues: Probable endonuclease 4 (290 aa).

Zn(2+) contacts are provided by His66, His106, Glu143, Asp179, His182, His216, Asp229, His231, and Glu261.

It belongs to the AP endonuclease 2 family. It depends on Zn(2+) as a cofactor.

It catalyses the reaction Endonucleolytic cleavage to 5'-phosphooligonucleotide end-products.. Functionally, endonuclease IV plays a role in DNA repair. It cleaves phosphodiester bonds at apurinic or apyrimidinic (AP) sites, generating a 3'-hydroxyl group and a 5'-terminal sugar phosphate. This chain is Probable endonuclease 4, found in Solibacter usitatus (strain Ellin6076).